A 232-amino-acid chain; its full sequence is Pyridoxine 5'-phosphate synthase (232 aa).

Asn7 is a 3-amino-2-oxopropyl phosphate binding site. Position 9–10 (9–10) interacts with 1-deoxy-D-xylulose 5-phosphate; sequence DH. Arg18 lines the 3-amino-2-oxopropyl phosphate pocket. The Proton acceptor role is filled by His43. 1-deoxy-D-xylulose 5-phosphate contacts are provided by Arg45 and His50. Glu69 acts as the Proton acceptor in catalysis. Thr99 is a binding site for 1-deoxy-D-xylulose 5-phosphate. His185 (proton donor) is an active-site residue. 3-amino-2-oxopropyl phosphate is bound by residues Gly186 and 207 to 208; that span reads GH.

The protein belongs to the PNP synthase family. In terms of assembly, homooctamer; tetramer of dimers.

Its subcellular location is the cytoplasm. It catalyses the reaction 3-amino-2-oxopropyl phosphate + 1-deoxy-D-xylulose 5-phosphate = pyridoxine 5'-phosphate + phosphate + 2 H2O + H(+). It functions in the pathway cofactor biosynthesis; pyridoxine 5'-phosphate biosynthesis; pyridoxine 5'-phosphate from D-erythrose 4-phosphate: step 5/5. In terms of biological role, catalyzes the complicated ring closure reaction between the two acyclic compounds 1-deoxy-D-xylulose-5-phosphate (DXP) and 3-amino-2-oxopropyl phosphate (1-amino-acetone-3-phosphate or AAP) to form pyridoxine 5'-phosphate (PNP) and inorganic phosphate. This Gluconobacter oxydans (strain 621H) (Gluconobacter suboxydans) protein is Pyridoxine 5'-phosphate synthase.